Reading from the N-terminus, the 377-residue chain is uncharacterized protein (377 aa).

A coiled-coil region spans residues asparagine 309–lysine 375.

The protein belongs to the mimivirus L5 family.

This is an uncharacterized protein from Acanthamoeba polyphaga (Amoeba).